An 800-amino-acid chain; its full sequence is Transducin beta-like protein 3 (800 aa).

N-acetylalanine is present on A2. 13 WD repeats span residues 64-105 (EDQE…RLWK), 107-146 (IHTAPVATMAFDPTSTLLATGGCDGAVRVWDVVRCYGTHH), 149-190 (GSPG…CLAV), 193-232 (AHYSAVTSLTFSADGHTMLSSGRDKICVIWDLRSLQATRT), 245-284 (LPEEPAPELGVKSAGLHFLTAGDQGALRVWEAASGRCVHA), 290-329 (GPGRELTHCTLAHAAGLLLSVTADHNLLLYDARSLRLRKQ), 332-372 (GYSE…CQIL), 374-413 (GHTDIVLALDVFRKGRLFASCAKDQSIRVWRMNKSGEVAC), 419-459 (GHTH…LSKG), 477-516 (CHDKDINSVAVAPNDKLLATGSQDRTAKLWALPRCQLLGT), 519-560 (GHRR…KTFE), 562-602 (HDAS…RTLD), and 604-642 (HEDKVWGLHCSRLDDRALTGASDSRVVLWKDVTEAEQAE). S257 carries the phosphoserine modification. Residue K407 forms a Glycyl lysine isopeptide (Lys-Gly) (interchain with G-Cter in SUMO2) linkage.

As to quaternary structure, part of the small subunit (SSU) processome, composed of more than 70 proteins and the RNA chaperone small nucleolar RNA (snoRNA) U3.

The protein localises to the nucleus. The protein resides in the nucleolus. In terms of biological role, part of the small subunit (SSU) processome, first precursor of the small eukaryotic ribosomal subunit. During the assembly of the SSU processome in the nucleolus, many ribosome biogenesis factors, an RNA chaperone and ribosomal proteins associate with the nascent pre-rRNA and work in concert to generate RNA folding, modifications, rearrangements and cleavage as well as targeted degradation of pre-ribosomal RNA by the RNA exosome. This chain is Transducin beta-like protein 3 (TBL3), found in Bos taurus (Bovine).